The chain runs to 428 residues: 3-phosphoshikimate 1-carboxyvinyltransferase (428 aa).

3-phosphoshikimate-binding residues include lysine 22, serine 23, and arginine 27. Lysine 22 contacts phosphoenolpyruvate. Residues glycine 94 and arginine 122 each coordinate phosphoenolpyruvate. 4 residues coordinate 3-phosphoshikimate: serine 167, glutamine 169, aspartate 314, and lysine 341. Glutamine 169 lines the phosphoenolpyruvate pocket. Catalysis depends on aspartate 314, which acts as the Proton acceptor. 2 residues coordinate phosphoenolpyruvate: arginine 345 and arginine 387.

It belongs to the EPSP synthase family. In terms of assembly, monomer.

It is found in the cytoplasm. It catalyses the reaction 3-phosphoshikimate + phosphoenolpyruvate = 5-O-(1-carboxyvinyl)-3-phosphoshikimate + phosphate. Its pathway is metabolic intermediate biosynthesis; chorismate biosynthesis; chorismate from D-erythrose 4-phosphate and phosphoenolpyruvate: step 6/7. In terms of biological role, catalyzes the transfer of the enolpyruvyl moiety of phosphoenolpyruvate (PEP) to the 5-hydroxyl of shikimate-3-phosphate (S3P) to produce enolpyruvyl shikimate-3-phosphate and inorganic phosphate. The chain is 3-phosphoshikimate 1-carboxyvinyltransferase from Geotalea uraniireducens (strain Rf4) (Geobacter uraniireducens).